The sequence spans 222 residues: MSHLVKMENGQSQTIQEMLGCIERYNPDHLKILESYVQDQAKNNTYDLEANLAVLKLYQFNPHMLNFDITYTILLKCLTNLPHTDFVMAKCLLLPQQMKDENVQTIIDLADILERADFTLFWQRAEVNRTMFRHISGFHDSIRKFVSHVVGITFQTIKKDLLKELLGGIEDSTLESWIKRNGWKHQGQDLVVVATQDDKIKTKNITEKIEFENVGALMAQCI.

Residues 46–208 form the PCI domain; the sequence is YDLEANLAVL…KIKTKNITEK (163 aa).

This sequence belongs to the eIF-3 subunit K family. Component of the eukaryotic translation initiation factor 3 (eIF-3) complex. The eIF-3 complex interacts with pix.

The protein localises to the cytoplasm. Component of the eukaryotic translation initiation factor 3 (eIF-3) complex, which is involved in protein synthesis of a specialized repertoire of mRNAs and, together with other initiation factors, stimulates binding of mRNA and methionyl-tRNAi to the 40S ribosome. The eIF-3 complex specifically targets and initiates translation of a subset of mRNAs involved in cell proliferation. The polypeptide is Eukaryotic translation initiation factor 3 subunit K (Drosophila mojavensis (Fruit fly)).